Reading from the N-terminus, the 66-residue chain is SPbeta prophage-derived uncharacterized protein YopM (66 aa).

The sequence is that of SPbeta prophage-derived uncharacterized protein YopM (yopM) from Bacillus subtilis (strain 168).